A 143-amino-acid chain; its full sequence is Large ribosomal subunit protein uL13 (143 aa).

It belongs to the universal ribosomal protein uL13 family. Part of the 50S ribosomal subunit.

This protein is one of the early assembly proteins of the 50S ribosomal subunit, although it is not seen to bind rRNA by itself. It is important during the early stages of 50S assembly. This is Large ribosomal subunit protein uL13 from Albidiferax ferrireducens (strain ATCC BAA-621 / DSM 15236 / T118) (Rhodoferax ferrireducens).